We begin with the raw amino-acid sequence, 277 residues long: tRNA pseudouridine synthase B (277 aa).

Residue aspartate 38 is the Nucleophile of the active site.

Belongs to the pseudouridine synthase TruB family. Type 1 subfamily.

The enzyme catalyses uridine(55) in tRNA = pseudouridine(55) in tRNA. Functionally, responsible for synthesis of pseudouridine from uracil-55 in the psi GC loop of transfer RNAs. The sequence is that of tRNA pseudouridine synthase B from Sulfurovum sp. (strain NBC37-1).